A 343-amino-acid chain; its full sequence is Palmitoyltransferase ZDHHC4 (343 aa).

At Met1–Asp2 the chain is on the lumenal side. A helical transmembrane segment spans residues Phe3–Ile23. At Gly24–Thr67 the chain is on the cytoplasmic side. The helical transmembrane segment at Phe68–Phe88 threads the bilayer. The Lumenal segment spans residues Gly89–Glu95. Residues Phe96–Thr116 traverse the membrane as a helical segment. The Cytoplasmic segment spans residues Leu117–Ser196. The DHHC domain occupies Val149–Phe199. The S-palmitoyl cysteine intermediate role is filled by Cys179. A helical membrane pass occupies residues Tyr197–Val217. The Lumenal portion of the chain corresponds to Arg218 to Arg255. The helical transmembrane segment at Ile256–Phe276 threads the bilayer. The Cytoplasmic portion of the chain corresponds to Cys277 to Lys343. The Di-lysine motif signature appears at Arg340–Lys343.

Belongs to the DHHC palmitoyltransferase family. As to quaternary structure, interacts with CPT1A.

Its subcellular location is the endoplasmic reticulum membrane. It is found in the golgi apparatus membrane. The protein localises to the cell membrane. The enzyme catalyses L-cysteinyl-[protein] + hexadecanoyl-CoA = S-hexadecanoyl-L-cysteinyl-[protein] + CoA. In terms of biological role, palmitoyltransferase that could catalyze the addition of palmitate onto protein substrates including the D(2) dopamine receptor DRD2, GSK3B or MAVS. Mediates GSK3B palmitoylation to prevent its AKT1-mediated phosphorylation leading to activation of the STAT3 signaling pathway. Also catalyzes MAVS palmitoylation which promotes its stabilization and activation by inhibiting 'Lys-48'- but facilitating 'Lys-63'-linked ubiquitination. The protein is Palmitoyltransferase ZDHHC4 of Bos taurus (Bovine).